We begin with the raw amino-acid sequence, 149 residues long: Large ribosomal subunit protein bL9 (149 aa).

It belongs to the bacterial ribosomal protein bL9 family.

Functionally, binds to the 23S rRNA. The chain is Large ribosomal subunit protein bL9 from Fervidobacterium nodosum (strain ATCC 35602 / DSM 5306 / Rt17-B1).